The following is a 443-amino-acid chain: Probable serine transporter (443 aa).

Topologically, residues 1–48 are cytoplasmic; it reads MEIASNKGVIADASTPAGRAGMSESEWREAIKFDSTDTGWVIMSIGMA. Residues 49 to 69 traverse the membrane as a helical segment; sequence IGAGIVFLPVQVGLMGLWVFL. Over 70-110 the chain is Periplasmic; it reads LSSVIGYPAMYLFQRLFINTLAESPECKDYPSVISGYLGKN. A helical transmembrane segment spans residues 111-131; that stretch reads WGILLGALYFVMLVIWMFVYS. Residues 132 to 149 are Cytoplasmic-facing; sequence TAITNDSASYLHTFGVTE. A helical membrane pass occupies residues 150–170; the sequence is GLLSDSPFYGLVLICILVAIS. At 171–182 the chain is on the periplasmic side; the sequence is SRGEKLLFKIST. The chain crosses the membrane as a helical span at residues 183–203; it reads GMVLTKLLVVAALGVSMVGMW. The Cytoplasmic segment spans residues 204–214; the sequence is HLYNVGSLPPL. A helical membrane pass occupies residues 215–235; sequence GLLVKNAIITLPFTLTSILFI. The Periplasmic portion of the chain corresponds to 236-264; the sequence is QTLSPMVISYRSREKSIEVARHKALRAMN. The helical transmembrane segment at 265 to 285 threads the bilayer; that stretch reads IAFGILFVTVFFYAVSFTLAM. Residues 286–297 lie on the Cytoplasmic side of the membrane; it reads GHDEAVKAYEQN. Helical transmembrane passes span 298-318 and 319-339; these read ISALAIAAQFISGDGAAWVKV and VSVILNIFAVMTAFFGVYLGF. The Cytoplasmic portion of the chain corresponds to 340 to 367; sequence REATQGIVMNILRRKMPAEKINENLVQR. Residues 368–388 traverse the membrane as a helical segment; sequence GIMIFAILLAWSAIVLNAPVL. Position 389 (S389) is a topological domain, periplasmic. Residues 390–410 form a helical membrane-spanning segment; it reads FTSICSPIFGMVGCLIPAWLV. Over 411-421 the chain is Cytoplasmic; sequence YKVPALHKYKG. The chain crosses the membrane as a helical span at residues 422 to 442; sequence MSLYLIIVTGLLLCVSPFLAF. Residue S443 is a topological domain, periplasmic.

It belongs to the amino acid/polyamine transporter 2 family. SdaC/TdcC subfamily.

It is found in the cell inner membrane. Plays a role in L-cysteine detoxification. May transport both D- and L-serine. The chain is Probable serine transporter (dlsT) from Escherichia coli (strain K12).